Here is a 221-residue protein sequence, read N- to C-terminus: Epididymal secretory glutathione peroxidase (221 aa).

An N-terminal signal peptide occupies residues 1 to 21 (MVTELRVFYLVPLLLASYVQT). Residue C73 is part of the active site.

This sequence belongs to the glutathione peroxidase family. In terms of tissue distribution, epididymis.

It localises to the secreted. The enzyme catalyses 2 glutathione + H2O2 = glutathione disulfide + 2 H2O. Its function is as follows. Protects cells and enzymes from oxidative damage, by catalyzing the reduction of hydrogen peroxide, lipid peroxides and organic hydroperoxide, by glutathione. May constitute a glutathione peroxidase-like protective system against peroxide damage in sperm membrane lipids. This Mus musculus (Mouse) protein is Epididymal secretory glutathione peroxidase (Gpx5).